Consider the following 240-residue polypeptide: UDP-2,3-diacylglucosamine hydrolase (240 aa).

Mn(2+) is bound by residues aspartate 8, histidine 10, aspartate 41, asparagine 79, and histidine 114. Substrate is bound at residue 79–80 (NR). Substrate is bound by residues aspartate 122, serine 160, asparagine 164, lysine 167, and histidine 195. The Mn(2+) site is built by histidine 195 and histidine 197.

The protein belongs to the LpxH family. The cofactor is Mn(2+).

It is found in the cell inner membrane. It catalyses the reaction UDP-2-N,3-O-bis[(3R)-3-hydroxytetradecanoyl]-alpha-D-glucosamine + H2O = 2-N,3-O-bis[(3R)-3-hydroxytetradecanoyl]-alpha-D-glucosaminyl 1-phosphate + UMP + 2 H(+). Its pathway is glycolipid biosynthesis; lipid IV(A) biosynthesis; lipid IV(A) from (3R)-3-hydroxytetradecanoyl-[acyl-carrier-protein] and UDP-N-acetyl-alpha-D-glucosamine: step 4/6. Hydrolyzes the pyrophosphate bond of UDP-2,3-diacylglucosamine to yield 2,3-diacylglucosamine 1-phosphate (lipid X) and UMP by catalyzing the attack of water at the alpha-P atom. Involved in the biosynthesis of lipid A, a phosphorylated glycolipid that anchors the lipopolysaccharide to the outer membrane of the cell. In Escherichia coli O81 (strain ED1a), this protein is UDP-2,3-diacylglucosamine hydrolase.